Consider the following 564-residue polypeptide: 4-hydroxy-7-methoxy-3-oxo-3,4-dihydro-2H-1,4-benzoxazin-2-yl glucoside beta-D-glucosidase 1d, chloroplastic (564 aa).

Residues 1–50 constitute a chloroplast transit peptide; the sequence is MALLAAATLNPTTHLSLRSRAGRNSENLWLRSAASSQKSKGRFCNLTVRA. A beta-D-glucoside is bound by residues Gln92, His194, and 239 to 240; that span reads NE. The active-site Proton donor is the Glu240. Cys259 and Cys265 form a disulfide bridge. Residues Tyr383, Glu456, Trp504, 511–512, and Phe520 contribute to the a beta-D-glucoside site; that span reads EW. Glu456 acts as the Nucleophile in catalysis.

It belongs to the glycosyl hydrolase 1 family. Homo- and heterohexamers. Expressed in young seedlings early after germination.

The protein resides in the plastid. Its subcellular location is the chloroplast. It catalyses the reaction Hydrolysis of terminal, non-reducing beta-D-glucosyl residues with release of beta-D-glucose.. It carries out the reaction DIMBOA beta-D-glucoside + H2O = DIMBOA + D-glucose. The catalysed reaction is DIBOA beta-D-glucoside + H2O = DIBOA + D-glucose. Its function is as follows. Acts in defense of young plant parts against pests via the production of hydroxamic acids from hydroxamic acid glucosides. Enzymatic activity is highly correlated with plant growth. The preferred substrate is DIMBOA-beta-D-glucoside. This chain is 4-hydroxy-7-methoxy-3-oxo-3,4-dihydro-2H-1,4-benzoxazin-2-yl glucoside beta-D-glucosidase 1d, chloroplastic (GLU1D), found in Triticum aestivum (Wheat).